The following is a 469-amino-acid chain: Acetyl-CoA decarbonylase/synthase complex subunit beta 1 (469 aa).

Residues Cys-189, Cys-192, Cys-278, and Cys-280 each contribute to the [Ni-Fe-S] cluster site.

The protein belongs to the CdhC family. Monomer. The ACDS complex is made up of alpha, epsilon, beta, gamma and delta chains with a probable stoichiometry of (alpha(2)epsilon(2))(4)-beta(8)-(gamma(1)delta(1))(8) (Potential). The cofactor is [Ni-Fe-S] cluster.

The enzyme catalyses Co(I)-[corrinoid Fe-S protein] + acetyl-CoA + H(+) = methyl-Co(III)-[corrinoid Fe-S protein] + CO + CoA. Its pathway is one-carbon metabolism; methanogenesis from acetate. In terms of biological role, part of a complex that catalyzes the reversible cleavage of acetyl-CoA, allowing growth on acetate as sole source of carbon and energy. The alpha-epsilon complex generates CO from CO(2), while the beta subunit (this protein) combines the CO with CoA and a methyl group to form acetyl-CoA. The methyl group, which is incorporated into acetyl-CoA, is transferred to the beta subunit by a corrinoid iron-sulfur protein (the gamma-delta complex). This Methanosarcina mazei (strain ATCC BAA-159 / DSM 3647 / Goe1 / Go1 / JCM 11833 / OCM 88) (Methanosarcina frisia) protein is Acetyl-CoA decarbonylase/synthase complex subunit beta 1 (cdhC1).